A 194-amino-acid chain; its full sequence is MKLLQHLTLIFCLLILTACSSRQQQPDNTNWRQQREKLESVTHWTISGKLAIITPEKKGSVRIRWQQNGDDYHLNLTSLLGTRVMEMRKTGEQIVIIDDKGQEYRGTDAEYLVYRLTGWQMPVYKLPMWIKGLPGDTDYQINPNGQVTQIKTAQWQMQYQTYQPVDGWMMPENITFKGQQTELRLVINEWKLAK.

Residues 1–18 (MKLLQHLTLIFCLLILTA) form the signal peptide. Cys-19 carries the N-palmitoyl cysteine lipid modification. The S-diacylglycerol cysteine moiety is linked to residue Cys-19.

This sequence belongs to the LolB family. In terms of assembly, monomer.

It is found in the cell outer membrane. Plays a critical role in the incorporation of lipoproteins in the outer membrane after they are released by the LolA protein. This chain is Outer-membrane lipoprotein LolB, found in Tolumonas auensis (strain DSM 9187 / NBRC 110442 / TA 4).